The following is a 340-amino-acid chain: GTPase Obg (340 aa).

The region spanning 1-159 (MGFIDEVKLC…KHVLLKLKVL (159 aa)) is the Obg domain. The 170-residue stretch at 160-329 (SDVGIIGMPN…LSEKLKKSNS (170 aa)) folds into the OBG-type G domain. Residues 166–173 (GMPNAGKS), 191–195 (FTTVR), 212–215 (DIPG), 279–282 (NKCD), and 310–312 (NGD) contribute to the GTP site. Residues serine 173 and threonine 193 each contribute to the Mg(2+) site.

Belongs to the TRAFAC class OBG-HflX-like GTPase superfamily. OBG GTPase family. Monomer. It depends on Mg(2+) as a cofactor.

Its subcellular location is the cytoplasm. In terms of biological role, an essential GTPase which binds GTP, GDP and possibly (p)ppGpp with moderate affinity, with high nucleotide exchange rates and a fairly low GTP hydrolysis rate. Plays a role in control of the cell cycle, stress response, ribosome biogenesis and in those bacteria that undergo differentiation, in morphogenesis control. This Wolbachia pipientis wMel protein is GTPase Obg.